Reading from the N-terminus, the 212-residue chain is Leucine efflux protein (212 aa).

The next 6 membrane-spanning stretches (helical) occupy residues 12–32 (TYLV…LFVL), 49–69 (GVFI…ATLI), 71–91 (TTPI…LYLG), 122–142 (ILSL…VQFI), 153–173 (FFIL…FLII), and 188–208 (LAKV…ARLA).

It belongs to the Rht family.

It localises to the cell inner membrane. The catalysed reaction is L-leucine(in) + H(+)(out) = L-leucine(out) + H(+)(in). Leucine export is inhibited by the proton ionophore carbonyl cyanide m-chlorophenylhydrazone (CCCP). Exporter of leucine. Can also transport its natural analog L-alpha-amino-n-butyric acid and some other structurally unrelated amino acids. Leucine excretion is probably driven by proton motive force. The polypeptide is Leucine efflux protein (Escherichia coli (strain K12)).